The chain runs to 318 residues: Porphobilinogen deaminase (318 aa).

Cys-241 carries the S-(dipyrrolylmethanemethyl)cysteine modification.

The protein belongs to the HMBS family. Monomer. Dipyrromethane is required as a cofactor.

It catalyses the reaction 4 porphobilinogen + H2O = hydroxymethylbilane + 4 NH4(+). It functions in the pathway porphyrin-containing compound metabolism; protoporphyrin-IX biosynthesis; coproporphyrinogen-III from 5-aminolevulinate: step 2/4. Tetrapolymerization of the monopyrrole PBG into the hydroxymethylbilane pre-uroporphyrinogen in several discrete steps. The polypeptide is Porphobilinogen deaminase (Citrifermentans bemidjiense (strain ATCC BAA-1014 / DSM 16622 / JCM 12645 / Bem) (Geobacter bemidjiensis)).